A 312-amino-acid chain; its full sequence is Carbonic anhydrase 4 (312 aa).

Residues 1–18 (MRLLLALLVLAAAPPQAR) form the signal peptide. Positions 21–285 (SHWCYQIQVK…LGQRQVFRSG (265 aa)) constitute an Alpha-carbonic anhydrase domain. 2 disulfide bridges follow: cysteine 24–cysteine 36 and cysteine 46–cysteine 229. N-linked (GlcNAc...) asparagine glycosylation occurs at asparagine 33. The active-site Proton donor/acceptor is histidine 88. Zn(2+) is bound by residues histidine 115, histidine 117, and histidine 140. 2 N-linked (GlcNAc...) asparagine glycosylation sites follow: asparagine 152 and asparagine 195. Position 225 to 226 (225 to 226 (TT)) interacts with substrate. A glycan (N-linked (GlcNAc...) asparagine) is linked at asparagine 265. A lipid anchor (GPI-anchor amidated serine) is attached at serine 284. Residues 285 to 312 (GAPGLLLAQPLPTLLAPVLACLTVGFLR) constitute a propeptide, removed in mature form.

This sequence belongs to the alpha-carbonic anhydrase family. In terms of assembly, interacts with SLC4A4. Zn(2+) serves as cofactor.

Its subcellular location is the cell membrane. It catalyses the reaction hydrogencarbonate + H(+) = CO2 + H2O. Inhibited by acetazolamide. Functionally, catalyzes the reversible hydration of carbon dioxide into bicarbonate and protons and thus is essential to maintaining intracellular and extracellular pH. May stimulate the sodium/bicarbonate transporter activity of SLC4A4 that acts in pH homeostasis. It is essential for acid overload removal from the retina and retina epithelium, and acid release in the choriocapillaris in the choroid. This chain is Carbonic anhydrase 4 (CA4), found in Bos taurus (Bovine).